We begin with the raw amino-acid sequence, 492 residues long: Catalase (492 aa).

Residues histidine 65 and asparagine 138 contribute to the active site. Position 348 (tyrosine 348) interacts with heme.

The protein belongs to the catalase family. In terms of assembly, homotetramer. Heme is required as a cofactor.

It localises to the cytoplasm. The protein resides in the cytosol. The protein localises to the peroxisome matrix. It carries out the reaction 2 H2O2 = O2 + 2 H2O. Functionally, catalyzes the degradation of hydrogen peroxide (H(2)O(2)) generated by peroxisomal oxidases to water and oxygen, thereby protecting cells from the toxic effects of hydrogen peroxide. The sequence is that of Catalase from Vigna radiata var. radiata (Mung bean).